The chain runs to 927 residues: Transmembrane protein 132 homolog (927 aa).

The N-terminal stretch at 1–18 is a signal peptide; that stretch reads MLKKLWICISCIVTTALS. The chain crosses the membrane as a helical span at residues 749–769; it reads FHIFVLTIIGLIILFLFISFV. The tract at residues 789–842 is disordered; it reads LSSSSGSNSRQEETNEWVWLSQPQPPSSTISSGYSGNKSTAERQSSNGDDPSRT. Positions 817 to 842 are enriched in polar residues; that stretch reads TISSGYSGNKSTAERQSSNGDDPSRT.

Belongs to the TMEM132 family. In terms of assembly, interacts with gex-3. Specifically expressed in neurons.

The protein resides in the membrane. Its function is as follows. Regulates neuronal morphology via inhibition of the WAVE regulatory complex (WCR), a complex that controls F-actin cytoskeletal dynamics. The polypeptide is Transmembrane protein 132 homolog (Caenorhabditis elegans).